A 310-amino-acid polypeptide reads, in one-letter code: Mas-related G-protein coupled receptor member E (310 aa).

The Extracellular portion of the chain corresponds to 1-22 (MTSLSVHTDSPSTQGEMAFNLT). The N-linked (GlcNAc...) asparagine glycan is linked to Asn20. A helical membrane pass occupies residues 23-43 (ILSLTELLSLGGLLGNGVALW). The Cytoplasmic portion of the chain corresponds to 44 to 60 (LLNQNVYRNPFSIYLLD). A helical membrane pass occupies residues 61–81 (VACADLIFLCCHMVAIIPELL). Over 82 to 92 (QDQLNFPEFVH) the chain is Extracellular. Residues 93 to 113 (ISLTMLRFFCYIVGLSLLAAI) form a helical membrane-spanning segment. Over 114 to 133 (STEQCLATLFPAWYLCRRPR) the chain is Cytoplasmic. A helical transmembrane segment spans residues 134–154 (YLTTCVCALIWVLCLLLDLLL). Residues 155–174 (SGACTQFFGAPSYHLCDMLW) are Extracellular-facing. Residues 175-195 (LVVAVLLAALCCTMCVTSLLL) traverse the membrane as a helical segment. At 196–213 (LLRVERGPERHQPRGFPT) the chain is on the cytoplasmic side. Residues 214-234 (LVLLAVLLFLFCGLPFGIFWL) traverse the membrane as a helical segment. The Extracellular portion of the chain corresponds to 235-248 (SKNLSWHIPLYFYH). N-linked (GlcNAc...) asparagine glycosylation is present at Asn237. A helical membrane pass occupies residues 249 to 269 (FSFFMASVHSAAKPAIYFFLG). The Cytoplasmic portion of the chain corresponds to 270–310 (STPGQRFREPLRLVLQRALGDEAELGAGREASQGGLVDMTV).

It belongs to the G-protein coupled receptor 1 family. Mas subfamily.

Its subcellular location is the cell membrane. Orphan receptor. May regulate nociceptor function and/or development, including the sensation or modulation of pain. In Mus musculus (Mouse), this protein is Mas-related G-protein coupled receptor member E (Mrgpre).